The primary structure comprises 280 residues: Undecaprenyl-diphosphatase (280 aa).

Helical transmembrane passes span 1–21 (MTIL…FLPV), 41–61 (FVRA…LVLY), 87–107 (FDLY…GFLF), 115–135 (LGSV…MLFV), 147–167 (ITYP…FLPG), 186–206 (KAAA…ATLL), 226–246 (VLLV…KFFI), and 260–280 (YRIL…SLAV).

The protein belongs to the UppP family.

The protein resides in the cell inner membrane. The catalysed reaction is di-trans,octa-cis-undecaprenyl diphosphate + H2O = di-trans,octa-cis-undecaprenyl phosphate + phosphate + H(+). Catalyzes the dephosphorylation of undecaprenyl diphosphate (UPP). Confers resistance to bacitracin. This chain is Undecaprenyl-diphosphatase, found in Porphyromonas gingivalis (strain ATCC BAA-308 / W83).